The sequence spans 423 residues: L-cysteine:1D-myo-inositol 2-amino-2-deoxy-alpha-D-glucopyranoside ligase (423 aa).

Cys45 serves as a coordination point for Zn(2+). L-cysteinyl-5'-AMP contacts are provided by residues Cys45–Thr48, Thr60, and Asn83–Thr85. The 'HIGH' region motif lies at Ile47–His57. The 'ERGGDP' region signature appears at Asp197–Pro202. Residue Trp238 participates in L-cysteinyl-5'-AMP binding. Cys242 lines the Zn(2+) pocket. An L-cysteinyl-5'-AMP-binding site is contributed by Gly260 to Asp262. Residue His267 participates in Zn(2+) binding. Ile294 is an L-cysteinyl-5'-AMP binding site. The 'KMSKS' region motif lies at Lys300–Ser304.

The protein belongs to the class-I aminoacyl-tRNA synthetase family. MshC subfamily. As to quaternary structure, monomer. Requires Zn(2+) as cofactor.

It catalyses the reaction 1D-myo-inositol 2-amino-2-deoxy-alpha-D-glucopyranoside + L-cysteine + ATP = 1D-myo-inositol 2-(L-cysteinylamino)-2-deoxy-alpha-D-glucopyranoside + AMP + diphosphate + H(+). Catalyzes the ATP-dependent condensation of GlcN-Ins and L-cysteine to form L-Cys-GlcN-Ins. This Jonesia denitrificans (strain ATCC 14870 / DSM 20603 / BCRC 15368 / CIP 55.134 / JCM 11481 / NBRC 15587 / NCTC 10816 / Prevot 55134) (Listeria denitrificans) protein is L-cysteine:1D-myo-inositol 2-amino-2-deoxy-alpha-D-glucopyranoside ligase.